Here is a 103-residue protein sequence, read N- to C-terminus: GP16 protein (103 aa).

This Orgyia pseudotsugata multicapsid polyhedrosis virus (OpMNPV) protein is GP16 protein (GP16).